A 186-amino-acid polypeptide reads, in one-letter code: ATP-dependent protease subunit HslV (186 aa).

Residue threonine 14 is part of the active site. Positions 168, 171, and 174 each coordinate Na(+).

The protein belongs to the peptidase T1B family. HslV subfamily. A double ring-shaped homohexamer of HslV is capped on each side by a ring-shaped HslU homohexamer. The assembly of the HslU/HslV complex is dependent on binding of ATP.

The protein resides in the cytoplasm. It catalyses the reaction ATP-dependent cleavage of peptide bonds with broad specificity.. With respect to regulation, allosterically activated by HslU binding. Protease subunit of a proteasome-like degradation complex believed to be a general protein degrading machinery. The sequence is that of ATP-dependent protease subunit HslV from Methylorubrum extorquens (strain CM4 / NCIMB 13688) (Methylobacterium extorquens).